The sequence spans 825 residues: NT-3 growth factor receptor (825 aa).

The N-terminal stretch at 1–31 is a signal peptide; sequence MDVSLCPAKCSFWRIFLLGSVWLDYVGSVLA. 2 disulfides stabilise this stretch: Cys-32–Cys-38 and Cys-36–Cys-45. Residues 32-429 are Extracellular-facing; it reads CPANCVCSKT…TVTHKPEEDT (398 aa). Residues Asn-68, Asn-72, and Asn-79 are each glycosylated (N-linked (GlcNAc...) asparagine). 2 LRR repeats span residues 104 to 125 and 128 to 149; these read GLQK…AFAK and HLRY…LFQT. N-linked (GlcNAc...) asparagine glycans are attached at residues Asn-133 and Asn-163. Residues 160–209 enclose the LRRCT domain; sequence NFFNCSCDIRWMQLWQEQGEARLDSQSLYCISADGSQLPLFRMNISQCDL. 2 disulfide bridges follow: Cys-164/Cys-189 and Cys-166/Cys-207. Residues Asn-203, Asn-218, Asn-232, Asn-259, Asn-267, Asn-272, and Asn-294 are each glycosylated (N-linked (GlcNAc...) asparagine). 2 consecutive Ig-like C2-type domains span residues 210-300 and 309-382; these read PEIS…VALT and SLVE…IAKN. Cysteines 231 and 284 form a disulfide. A disulfide bridge links Cys-320 with Cys-362. N-linked (GlcNAc...) asparagine glycans are attached at residues Asn-375 and Asn-388. Residues 430–453 traverse the membrane as a helical segment; the sequence is FGVSIAVGLAAFACVLLVVLFIMI. The Cytoplasmic portion of the chain corresponds to 454–825; sequence NKYGRRSKFG…ATPIYLDILG (372 aa). The residue at position 493 (Ser-493) is a Phosphoserine. The residue at position 516 (Tyr-516) is a Phosphotyrosine. One can recognise a Protein kinase domain in the interval 538 to 825; it reads IVLKRELGEG…ATPIYLDILG (288 aa). Residues 544-552 and Lys-572 contribute to the ATP site; that span reads LGEGAFGKV. Asp-679 serves as the catalytic Proton acceptor. Tyr-705, Tyr-709, and Tyr-710 each carry phosphotyrosine; by autocatalysis.

Belongs to the protein kinase superfamily. Tyr protein kinase family. Insulin receptor subfamily. In terms of assembly, exists in a dynamic equilibrium between monomeric (low affinity) and dimeric (high affinity) structures. Binds SH2B2. Interacts with SQSTM1 and KIDINS220. Interacts with PTPRS. Interacts with MAPK8IP3/JIP3. In terms of processing, ligand-mediated auto-phosphorylation. As to expression, isoform 2 expression is restricted to specific areas in adult brain. Isoform 3 transcripts are readily detected early during embryogenesis and are expressed predominantly in adult brain and gonads.

The protein localises to the membrane. It catalyses the reaction L-tyrosyl-[protein] + ATP = O-phospho-L-tyrosyl-[protein] + ADP + H(+). Functionally, receptor tyrosine kinase involved in nervous system and probably heart development. Upon binding of its ligand NTF3/neurotrophin-3, NTRK3 autophosphorylates and activates different signaling pathways, including the phosphatidylinositol 3-kinase/AKT and the MAPK pathways, that control cell survival and differentiation. The protein is NT-3 growth factor receptor (Ntrk3) of Mus musculus (Mouse).